Here is a 364-residue protein sequence, read N- to C-terminus: DNA replication and repair protein RecF (364 aa).

ATP is bound at residue 30–37 (GRNAQGKT).

It belongs to the RecF family.

Its subcellular location is the cytoplasm. In terms of biological role, the RecF protein is involved in DNA metabolism; it is required for DNA replication and normal SOS inducibility. RecF binds preferentially to single-stranded, linear DNA. It also seems to bind ATP. The chain is DNA replication and repair protein RecF from Pelotomaculum thermopropionicum (strain DSM 13744 / JCM 10971 / SI).